We begin with the raw amino-acid sequence, 392 residues long: Formate-dependent phosphoribosylglycinamide formyltransferase (392 aa).

Residues 22–23 (EL) and E82 each bind N(1)-(5-phospho-beta-D-ribosyl)glycinamide. ATP-binding positions include R114, K155, 160-165 (SSGKGQ), 195-198 (EGVV), and E203. An ATP-grasp domain is found at 119-308 (RLAAEELQLP…EFALHVRAFL (190 aa)). Residues E267 and E279 each contribute to the Mg(2+) site. N(1)-(5-phospho-beta-D-ribosyl)glycinamide is bound by residues D286, K355, and 362-363 (RR).

It belongs to the PurK/PurT family. As to quaternary structure, homodimer.

It carries out the reaction N(1)-(5-phospho-beta-D-ribosyl)glycinamide + formate + ATP = N(2)-formyl-N(1)-(5-phospho-beta-D-ribosyl)glycinamide + ADP + phosphate + H(+). It participates in purine metabolism; IMP biosynthesis via de novo pathway; N(2)-formyl-N(1)-(5-phospho-D-ribosyl)glycinamide from N(1)-(5-phospho-D-ribosyl)glycinamide (formate route): step 1/1. Functionally, involved in the de novo purine biosynthesis. Catalyzes the transfer of formate to 5-phospho-ribosyl-glycinamide (GAR), producing 5-phospho-ribosyl-N-formylglycinamide (FGAR). Formate is provided by PurU via hydrolysis of 10-formyl-tetrahydrofolate. This Klebsiella pneumoniae (strain 342) protein is Formate-dependent phosphoribosylglycinamide formyltransferase.